The following is a 325-amino-acid chain: tRNA N(3)-methylcytidine methyltransferase Mettl2 (325 aa).

2 residues coordinate S-adenosyl-L-methionine: tryptophan 96 and tyrosine 100. Residues tyrosine 100, histidine 112, glutamate 138, glycine 140, aspartate 165, aspartate 191, and isoleucine 212 each coordinate S-adenosyl-L-homocysteine. 4 residues coordinate S-adenosyl-L-methionine: glycine 140, aspartate 165, aspartate 191, and isoleucine 212.

It belongs to the methyltransferase superfamily. METL family. As to quaternary structure, interacts with Psn. In terms of tissue distribution, widely expressed. Expressed in ovaries, head, thorax and abdomen of adult flies, and in the CNS of third instar larvae. Isoform 2 is predominantly expressed in larvae and in adult tissues that have been tested.

Functionally, probable methyltransferase. The polypeptide is tRNA N(3)-methylcytidine methyltransferase Mettl2 (Drosophila melanogaster (Fruit fly)).